A 196-amino-acid chain; its full sequence is MNLVPTVIEQSSRGERAYDIYSRLLKDRIIMLSGPIEDNMANSIVAQLLFLDAQDSTKDIYLYINSPGGVVTSGMAIYDTMNFIKSDVQTIVIGMAASMASVLVSSGTKGKRFGLPHSTVMIHQPSGGAQGQQTEIQIAAEEILKTRKMINEILAKNSGQSFEQVEQDTERDHYLTAQEAVDYGLLDGVMDSNNLK.

The active-site Nucleophile is the serine 98. Histidine 123 is a catalytic residue.

Belongs to the peptidase S14 family. Fourteen ClpP subunits assemble into 2 heptameric rings which stack back to back to give a disk-like structure with a central cavity, resembling the structure of eukaryotic proteasomes.

The protein resides in the cytoplasm. The catalysed reaction is Hydrolysis of proteins to small peptides in the presence of ATP and magnesium. alpha-casein is the usual test substrate. In the absence of ATP, only oligopeptides shorter than five residues are hydrolyzed (such as succinyl-Leu-Tyr-|-NHMec, and Leu-Tyr-Leu-|-Tyr-Trp, in which cleavage of the -Tyr-|-Leu- and -Tyr-|-Trp bonds also occurs).. In terms of biological role, cleaves peptides in various proteins in a process that requires ATP hydrolysis. Has a chymotrypsin-like activity. Plays a major role in the degradation of misfolded proteins. In Limosilactobacillus fermentum (strain NBRC 3956 / LMG 18251) (Lactobacillus fermentum), this protein is ATP-dependent Clp protease proteolytic subunit.